Reading from the N-terminus, the 669-residue chain is RNA-binding protein 14 (669 aa).

RRM domains are found at residues 1 to 73 (MKIF…MSRP) and 79 to 149 (WKIF…LSTK). Residues Lys126, Lys135, Lys138, Lys149, and Lys153 each participate in a glycyl lysine isopeptide (Lys-Gly) (interchain with G-Cter in SUMO2) cross-link. Disordered regions lie at residues 148-175 (TKGQKKGPGLAIQSGDKTKKPGAGDTAF) and 193-232 (NSTGGFDGQARQPTPPFFGRDRSPLRRSPPRASYVAPLTA). Ser161 carries the phosphoserine modification. Lys164 carries the N6-acetyllysine; alternate modification. A Glycyl lysine isopeptide (Lys-Gly) (interchain with G-Cter in SUMO2); alternate cross-link involves residue Lys164. A Phosphothreonine modification is found at Thr206. Phosphoserine occurs at positions 220, 242, 244, 256, 272, and 280. A disordered region spans residues 284-303 (PYRGQLASPSSQSAAASSLG). Residues 287-303 (GQLASPSSQSAAASSLG) are compositionally biased toward low complexity. The interval 307-354 (GAQPSASALSSYGGQPAAASSLNSYGAQGSSLASYGNQPSSYGAQAAS) is TRBP-interacting domain; interaction with STIL. A phosphoserine mark is found at Ser520, Ser523, Ser527, and Ser562. Residues 569–590 (ANSTPPPYERTRLSPPRASYDD) form a disordered region. Thr572 is subject to Phosphothreonine. Ser582 bears the Phosphoserine mark. Residue Lys600 forms a Glycyl lysine isopeptide (Lys-Gly) (interchain with G-Cter in SUMO2) linkage. 6 positions are modified to phosphoserine: Ser618, Ser620, Ser623, Ser627, Ser643, and Ser649.

Interacts with NCOA6, CITED1 and XRCC5/KU86. Interacts with SS18. Interacts with STIL and interferes with its interaction with CPAP. Interacts with gamma-tubulin. Part of the HDP-RNP complex composed of at least HEXIM1, PRKDC, XRCC5, XRCC6, paraspeckle proteins (SFPQ, NONO, PSPC1, RBM14, and MATR3) and NEAT1 RNA.

Its subcellular location is the nucleus. It localises to the nucleolus. The protein localises to the cytoplasm. Its function is as follows. May function as a nuclear receptor coactivator, enhancing transcription through other coactivators such as NCOA6 and CITED1. Regulates centriole biogenesis by suppressing the formation of aberrant centriolar protein complexes in the cytoplasm and thus preserving mitotic spindle integrity. Prevents the formation of the STIL-CPAP complex (which can induce the formation of aberrant centriolar protein complexes) by interfering with the interaction of STIL with CPAP. Plays a role in the regulation of DNA virus-mediated innate immune response by assembling into the HDP-RNP complex, a complex that serves as a platform for IRF3 phosphorylation and subsequent innate immune response activation through the cGAS-STING pathway. This Bos taurus (Bovine) protein is RNA-binding protein 14 (RBM14).